We begin with the raw amino-acid sequence, 718 residues long: Protein Hook homolog 3 (718 aa).

Position 1 is an N-acetylmethionine (methionine 1). The tract at residues 1–164 (MFSVESLERA…QELMSKESPV (164 aa)) is sufficient for interaction with microtubules. A phosphoserine mark is found at serine 3 and serine 6. In terms of domain architecture, Calponin-homology (CH) spans 10–126 (AELCESLLTW…RMLQLILGCA (117 aa)). Coiled coils occupy residues 167-433 (GNDA…VQAQ) and 462-667 (EIRE…YIVS). Serine 238 is subject to Phosphoserine. The required for association with Golgi stretch occupies residues 553 to 718 (EKLHEANNEL…PGHVQPATAR (166 aa)). The segment at 556–718 (HEANNELQKK…PGHVQPATAR (163 aa)) is required for interaction with MSR1. The segment at 682-718 (EDRLASTGSGQSFLARQRQATSSRRSYPGHVQPATAR) is disordered. Phosphoserine occurs at positions 693 and 707. Positions 696–707 (ARQRQATSSRRS) are enriched in low complexity.

Belongs to the hook family. As to quaternary structure, self-associates. Component of the FTS/Hook/FHIP complex (FHF complex), composed of AKTIP/FTS, FHIP1B, and one or more members of the Hook family of proteins HOOK1, HOOK2, and HOOK3. May interact directly with AKTIP/FTS, HOOK1 and HOOK2. Associates with several subunits of the homotypic vesicular sorting complex (the HOPS complex) including VPS16 and VPS41; these interactions may be indirect. Interacts with MSR1, and this association is stimulated by ligand binding to MSR1. Interacts with microtubules. Part of a tripartite complex with dynein and dynactin, acts an adapter linking the dynein motor complex and dynactin. Interacts with dynein intermediate chain and dynactin (DCTN1). Interacts with CCDC181. Interacts with LRGUK. (Microbial infection) Interacts with Salmonella typhimurium spiC.

The protein localises to the cytoplasm. Its subcellular location is the cytoskeleton. The protein resides in the golgi apparatus. Acts as an adapter protein linking the dynein motor complex to various cargos and converts dynein from a non-processive to a highly processive motor in the presence of dynactin. Facilitates the interaction between dynein and dynactin and activates dynein processivity (the ability to move along a microtubule for a long distance without falling off the track). Predominantly recruits 2 dyneins, which increases both the force and speed of the microtubule motor. Component of the FTS/Hook/FHIP complex (FHF complex). The FHF complex may function to promote vesicle trafficking and/or fusion via the homotypic vesicular protein sorting complex (the HOPS complex). May regulate clearance of endocytosed receptors such as MSR1. Participates in defining the architecture and localization of the Golgi complex. FHF complex promotes the distribution of AP-4 complex to the perinuclear area of the cell. Its function is as follows. (Microbial infection) May serve as a target for the spiC protein from Salmonella typhimurium, which inactivates it, leading to a strong alteration in cellular trafficking. The chain is Protein Hook homolog 3 from Homo sapiens (Human).